We begin with the raw amino-acid sequence, 217 residues long: Magnetosome protein MamA (217 aa).

TPR repeat units follow at residues 12–44 (VTLYAHYGLSVAKKLGMNMVDAFRAAFSVNDDI), 46–79 (QVYYRDKGISHAKAGRYSQAVMLLEQVYDADAFD), 80–113 (VDVALHLGIAYVKTGAVDRGTELLERSLADAPDN), 114–147 (VKVATVLGLTYVQVQKYDLAVPLLIKVAEANPIN), 148–181 (FNVRFRLGVALDNLGRFDEAIDSFKIALGLRPNE), and 182–215 (GKVHRAIAFSYEQMGRHEEALPHFKKANELDEGA). The segment at 41–112 (NDDIRQVYYR…LERSLADAPD (72 aa)) is N-terminal domain (NTD). The tract at residues 113 to 217 (NVKVATVLGL…ANELDEGASV (105 aa)) is C-terminal domain (CTD).

Belongs to the magnetosome MamA family. Oligomerizes into high molecular weight complexes (at least 560 kDa). Forms round, 20 nm diameter complexes with a central cavity. Interacts with full-length Mms6. Probably binds MamC.

Its subcellular location is the magnetosome membrane. Probably forms a large homooligomer on which other magnetosome subunits assemble. Required for formation of functional magnetosomes from pre-existing vesicles, it has a dynamic location in the cell. The chain is Magnetosome protein MamA from Paramagnetospirillum magneticum (strain ATCC 700264 / AMB-1) (Magnetospirillum magneticum).